Here is a 131-residue protein sequence, read N- to C-terminus: MSMSDPIADMLTRIRNAQMVEKVSVAMPSSKVKVAIAQVLKDEGYIDDFAVKAEGAKSELNIALKYYAGRPVIERLERVSKPGLRVYRGRNDIPQVMNGLGVAIVSTPKGVMTDRKARATGVGGEVICYVA.

This sequence belongs to the universal ribosomal protein uS8 family. As to quaternary structure, part of the 30S ribosomal subunit. Contacts proteins S5 and S12.

In terms of biological role, one of the primary rRNA binding proteins, it binds directly to 16S rRNA central domain where it helps coordinate assembly of the platform of the 30S subunit. The polypeptide is Small ribosomal subunit protein uS8 (Burkholderia ambifaria (strain MC40-6)).